A 117-amino-acid chain; its full sequence is MDKKASRIRRATRARRKIAELGATRLVVHRTPRHVYAQVIAANGSEVIAAASTVEKAIREQVKYTGNIDAAKAVGKAVAERALEKGVTVVAFDRSGFQYHGRVAALADSAREAGLKF.

Belongs to the universal ribosomal protein uL18 family. As to quaternary structure, part of the 50S ribosomal subunit; part of the 5S rRNA/L5/L18/L25 subcomplex. Contacts the 5S and 23S rRNAs.

In terms of biological role, this is one of the proteins that bind and probably mediate the attachment of the 5S RNA into the large ribosomal subunit, where it forms part of the central protuberance. The chain is Large ribosomal subunit protein uL18 from Vibrio cholerae serotype O1 (strain ATCC 39541 / Classical Ogawa 395 / O395).